A 245-amino-acid chain; its full sequence is Ureidoacrylate amidohydrolase RutB (245 aa).

Residue Asp-41 is the Proton acceptor of the active site. The active site involves Lys-150. Cys-183 (nucleophile) is an active-site residue.

Belongs to the isochorismatase family. RutB subfamily.

It catalyses the reaction (Z)-3-ureidoacrylate + H2O + H(+) = (Z)-3-aminoacrylate + NH4(+) + CO2. The enzyme catalyses (Z)-3-ureidoacrylate + H2O = (Z)-3-aminoacrylate + carbamate + H(+). The catalysed reaction is (Z)-2-methylureidoacrylate + H2O + H(+) = (Z)-2-methylaminoacrylate + NH4(+) + CO2. Its function is as follows. Hydrolyzes ureidoacrylate to form aminoacrylate and carbamate. The carbamate hydrolyzes spontaneously, thereby releasing one of the nitrogen atoms of the pyrimidine ring as ammonia and one of its carbon atoms as CO2. In Pseudomonas savastanoi pv. phaseolicola (strain 1448A / Race 6) (Pseudomonas syringae pv. phaseolicola (strain 1448A / Race 6)), this protein is Ureidoacrylate amidohydrolase RutB.